A 357-amino-acid chain; its full sequence is Dehydrogenase FUB6 (357 aa).

Over residues 1 to 17 (MGGEVSNKTWVFKQSPS) the composition is skewed to polar residues. The segment at 1–22 (MGGEVSNKTWVFKQSPSGLPEP) is disordered.

The protein belongs to the zinc-containing alcohol dehydrogenase family. Quinone oxidoreductase subfamily.

Its pathway is mycotoxin biosynthesis. Dehydrogenase; part of the gene cluster that mediates the biosynthesis of fusaric acid, a mycotoxin with low to moderate toxicity to animals and humans, but with high phytotoxic properties. L-aspartate is suggested as fusaric acid amino acid precursor that is activated and further processed to O-acetyl-L-homoserine by cluster enzymes aspartate kinase FUB3 and homoserine O-acetyltransferase FUB5, as well as enzymes of the primary metabolism. The polyketide synthase (PKS) FUB1 generates the triketide trans-2-hexenal which is presumptively released by the hydrolase FUB4 and linked to the NRPS-bound amino acid precursor by NAD(P)-dependent dehydrogenase FUB6. FUB1, FUB4, and the non-canonical NRPS Fub8 may form an enzyme complex. Further processing of the NRPS-bound intermediate might be carried out by FUB6 and the O-acetylhomoserine FUB7, enabling a spontaneous electrocyclization to close the carbon backbone of fusaric acid. Dihydrofusaric acid is likely to be released via reduction by the thioester reductase (TR) domain of FUB8 whereupon the final oxidation to fusaric acid may (also) be performed by the FMN-dependent dehydrogenase FUB9. The polypeptide is Dehydrogenase FUB6 (Fusarium oxysporum f. sp. lycopersici (strain 4287 / CBS 123668 / FGSC 9935 / NRRL 34936) (Fusarium vascular wilt of tomato)).